The chain runs to 235 residues: Orotidine 5'-phosphate decarboxylase (235 aa).

Substrate contacts are provided by residues Asp-17, Lys-39, 66-75 (DLKLHDIGNT), Thr-121, Arg-182, Gln-191, Gly-211, and Arg-212. The Proton donor role is filled by Lys-68.

Belongs to the OMP decarboxylase family. Type 1 subfamily. As to quaternary structure, homodimer.

The catalysed reaction is orotidine 5'-phosphate + H(+) = UMP + CO2. The protein operates within pyrimidine metabolism; UMP biosynthesis via de novo pathway; UMP from orotate: step 2/2. Functionally, catalyzes the decarboxylation of orotidine 5'-monophosphate (OMP) to uridine 5'-monophosphate (UMP). This is Orotidine 5'-phosphate decarboxylase from Afipia carboxidovorans (strain ATCC 49405 / DSM 1227 / KCTC 32145 / OM5) (Oligotropha carboxidovorans).